A 363-amino-acid chain; its full sequence is NAD(P)H-quinone oxidoreductase subunit 1, chloroplastic (363 aa).

Helical transmembrane passes span 28-48, 98-118, 127-147, 248-268, 300-320, and 343-363; these read WVLVPILTTVLGITIGVLVIV, FSIGPSIAVISILLSYSVIPF, LPIGVFLWIAISSVAPIGLLM, YSGIKFGLFYVASYLNLLVSS, VFGMTISIFITLAKTYLFLFI, and FLLPISLGNLLLTTSFQLFSL.

This sequence belongs to the complex I subunit 1 family. As to quaternary structure, NDH is composed of at least 16 different subunits, 5 of which are encoded in the nucleus.

The protein resides in the plastid. Its subcellular location is the chloroplast thylakoid membrane. It carries out the reaction a plastoquinone + NADH + (n+1) H(+)(in) = a plastoquinol + NAD(+) + n H(+)(out). The enzyme catalyses a plastoquinone + NADPH + (n+1) H(+)(in) = a plastoquinol + NADP(+) + n H(+)(out). NDH shuttles electrons from NAD(P)H:plastoquinone, via FMN and iron-sulfur (Fe-S) centers, to quinones in the photosynthetic chain and possibly in a chloroplast respiratory chain. The immediate electron acceptor for the enzyme in this species is believed to be plastoquinone. Couples the redox reaction to proton translocation, and thus conserves the redox energy in a proton gradient. The polypeptide is NAD(P)H-quinone oxidoreductase subunit 1, chloroplastic (Cucumis sativus (Cucumber)).